A 95-amino-acid chain; its full sequence is Cobalt transport protein CbiN (95 aa).

Helical transmembrane passes span 5 to 25 (HIIL…IYAG) and 67 to 87 (LLFA…IGYY).

This sequence belongs to the CbiN family. In terms of assembly, forms an energy-coupling factor (ECF) transporter complex composed of an ATP-binding protein (A component, CbiO), a transmembrane protein (T component, CbiQ) and 2 possible substrate-capture proteins (S components, CbiM and CbiN) of unknown stoichimetry.

The protein resides in the cell membrane. The protein operates within cofactor biosynthesis; adenosylcobalamin biosynthesis. In terms of biological role, part of the energy-coupling factor (ECF) transporter complex CbiMNOQ involved in cobalt import. The chain is Cobalt transport protein CbiN from Methanocaldococcus jannaschii (strain ATCC 43067 / DSM 2661 / JAL-1 / JCM 10045 / NBRC 100440) (Methanococcus jannaschii).